Reading from the N-terminus, the 449-residue chain is Glutamyl-tRNA reductase (449 aa).

Substrate contacts are provided by residues 58 to 61, Ser-121, 126 to 128, and Gln-132; these read TCNR and ETQ. The Nucleophile role is filled by Cys-59. NADP(+) is bound at residue 203-208; the sequence is GLGEMA.

It belongs to the glutamyl-tRNA reductase family. In terms of assembly, homodimer.

The enzyme catalyses (S)-4-amino-5-oxopentanoate + tRNA(Glu) + NADP(+) = L-glutamyl-tRNA(Glu) + NADPH + H(+). Its pathway is porphyrin-containing compound metabolism; protoporphyrin-IX biosynthesis; 5-aminolevulinate from L-glutamyl-tRNA(Glu): step 1/2. Its function is as follows. Catalyzes the NADPH-dependent reduction of glutamyl-tRNA(Glu) to glutamate 1-semialdehyde (GSA). The polypeptide is Glutamyl-tRNA reductase (Helicobacter pylori (strain J99 / ATCC 700824) (Campylobacter pylori J99)).